The chain runs to 267 residues: LysM and putative peptidoglycan-binding domain-containing protein 4 (267 aa).

Residues 1–211 (MRRGDPPPRA…RSNGADWGIQ (211 aa)) are Extracellular-facing. The disordered stretch occupies residues 30 to 64 (HRQEEPEASSEDEELNVMELRPRSRDSSSKEKEGV). The span at 35–45 (PEASSEDEELN) shows a compositional bias: acidic residues. A compositionally biased stretch (basic and acidic residues) spans 49-64 (LRPRSRDSSSKEKEGV). Residues 70-114 (LERDISHEDNLSKLALQYGCKVADIKRVNNLFQEQDMYALKSIKI) form the LysM domain. Asparagine 79 is a glycosylation site (N-linked (GlcNAc...) asparagine). A disordered region spans residues 130-152 (RTPQQRPSHDAAPSNSAMASVSG). Residues 142-152 (PSNSAMASVSG) are compositionally biased toward polar residues. Residues 212 to 232 (WWNAVIAMLLIGIVLPIFYVV) form a helical membrane-spanning segment. Over 233 to 267 (YYKTKDSGESAVDNVGVNISVSTSNSTREYNGKSP) the chain is Cytoplasmic.

The protein localises to the membrane. The protein is LysM and putative peptidoglycan-binding domain-containing protein 4 (lysmd4) of Danio rerio (Zebrafish).